Reading from the N-terminus, the 190-residue chain is Potassium-transporting ATPase KdpC subunit (190 aa).

A helical transmembrane segment spans residues 10–30; that stretch reads TFIFLLLITGGVYPLLTTALG.

It belongs to the KdpC family. As to quaternary structure, the system is composed of three essential subunits: KdpA, KdpB and KdpC.

It localises to the cell inner membrane. Functionally, part of the high-affinity ATP-driven potassium transport (or Kdp) system, which catalyzes the hydrolysis of ATP coupled with the electrogenic transport of potassium into the cytoplasm. This subunit acts as a catalytic chaperone that increases the ATP-binding affinity of the ATP-hydrolyzing subunit KdpB by the formation of a transient KdpB/KdpC/ATP ternary complex. This chain is Potassium-transporting ATPase KdpC subunit, found in Escherichia coli O9:H4 (strain HS).